Here is a 696-residue protein sequence, read N- to C-terminus: DNA ligase (696 aa).

NAD(+)-binding positions include 36-40 (DAVYD), 85-86 (SL), and glutamate 124. The active-site N6-AMP-lysine intermediate is lysine 126. NAD(+) is bound by residues arginine 147, glutamate 184, lysine 308, and lysine 332. 4 residues coordinate Zn(2+): cysteine 426, cysteine 429, cysteine 444, and cysteine 449. Residues 618 to 696 (QRTVSLQGQT…EEELLKLLAS (79 aa)) form the BRCT domain.

It belongs to the NAD-dependent DNA ligase family. LigA subfamily. It depends on Mg(2+) as a cofactor. The cofactor is Mn(2+).

The catalysed reaction is NAD(+) + (deoxyribonucleotide)n-3'-hydroxyl + 5'-phospho-(deoxyribonucleotide)m = (deoxyribonucleotide)n+m + AMP + beta-nicotinamide D-nucleotide.. Its function is as follows. DNA ligase that catalyzes the formation of phosphodiester linkages between 5'-phosphoryl and 3'-hydroxyl groups in double-stranded DNA using NAD as a coenzyme and as the energy source for the reaction. It is essential for DNA replication and repair of damaged DNA. The chain is DNA ligase from Prochlorococcus marinus (strain MIT 9303).